A 769-amino-acid polypeptide reads, in one-letter code: MNDSPIISVVLPFLIKDNDDKSLNYQGINNLIISIDSIIEQTFKEWELILVDDGSNNEILEQLLSKRYSTDNRIKFIINKENKGIVKSLNDAILNHCSPTSKYIARMDSDDISHPTRLQSQLKYLQSNETIDILGCPIKMFNNNKLIEILNNNNNNNNINNNVKELINIINNEESFKFIQHPDKDILMWSMFFNCCIVHPSVIFKRSIFTIEHCYEENNQFPFIEDYLFWLKSLIMKGLNISNIQSSTPLLYLRKHNNSISFKNIEKQKDSTANASCYYLNILFKRFNIDSEIIQNSSLSMKEIIQFFQLSPSSLSKINNISIELFEFAFKYLELIEKSCTKQQPNYSNSIKDAANEKMGELVSLCLSNYPNNQKSSLLWEKWLSRNPTSQLLSLLSNLNVKSSTTIINNNINNNNNNNNNNNNNNNNNNNNNNNNNNNNNSILNFISGINSNKINTPKSNNNKFKENGIRIICFSKDRAFQLKEYLRTFFKYLKNDDNGNDKFEIIVDVLFTYSNEKFKNSYQLVIESFPQVNFIKEENFTDQLINLVQKTNKLEYVMFSVDDILYYNEFNLKEYCLSLNSEPLALGFYMKLNKNITYCHTCNQDITIPLNSNTISRTENNFKYLKWNRNDNDCKKDWNYPWDLCSTIYRCNDIDSIINGIVKYYGIRNGINHPNRFEFNGNRPIIQKQIYQNKPYCLCLSDHYSPMSVVTINRVQDVYDNPIYDQTLSLDDLDQLLYSNKSLNDEKYKENSLSLNFKSVHIGELFIS.

The segment at 25–210 is N-acetylgalactosamine 3-beta-galactosyltransferase; that stretch reads YQGINNLIIS…SVIFKRSIFT (186 aa). The segment covering 410–441 has biased composition (low complexity); it reads NNINNNNNNNNNNNNNNNNNNNNNNNNNNNNN. The interval 410–442 is disordered; it reads NNINNNNNNNNNNNNNNNNNNNNNNNNNNNNNS. The interval 442–769 is alpha-1,2-fucosyltransferase; it reads SILNFISGIN…SVHIGELFIS (328 aa).

It belongs to the glycosyltransferase 2 family.

It catalyses the reaction an N-acetyl-beta-D-glucosaminyl derivative + UDP-alpha-D-galactose = a beta-D-galactosyl-(1-&gt;3)-N-acetyl-beta-D-glucosaminyl derivative + UDP + H(+). It carries out the reaction a beta-D-galactosyl-(1-&gt;3)-N-acetyl-beta-D-glucosaminyl derivative + GDP-beta-L-fucose = an alpha-L-Fuc-(1-&gt;2)-beta-D-Gal-(1-&gt;3)-beta-D-GlcNAc derivative + GDP + H(+). In terms of biological role, bifunctional protein composed of 2 glycosyltransferase domains involved in glycosylating skp1. The N-terminal part catalyzes the transfer of a galactose residue to GlcNAc-skp1 in a beta 1-3 linkage. The C-terminal part catalyzes the transfer of a fucose residue to Gal-GlcNAc-skp1 in an alpha 1-2 linkage. This is Bifunctional glycosyltransferase pgtA (pgtA) from Dictyostelium discoideum (Social amoeba).